The sequence spans 307 residues: Plasmodesmata-located protein 2 (307 aa).

A signal peptide spans 1–23 (MGLSISFLSIIMMMCLLFPDLNV). Over 24–275 (VVKSATTEYT…STSTGATGKT (252 aa)) the chain is Extracellular. 2 consecutive Gnk2-homologous domains span residues 33–136 (TTLI…VSGF) and 141–240 (GMEM…YYPN). Disulfide bonds link cysteine 40–cysteine 114, cysteine 90–cysteine 99, cysteine 102–cysteine 127, cysteine 149–cysteine 218, cysteine 194–cysteine 203, and cysteine 206–cysteine 231. Residues 246–268 (SSSSSSSSSSSSSGSSNSDPSTS) are compositionally biased toward low complexity. The segment at 246–270 (SSSSSSSSSSSSSGSSNSDPSTSTG) is disordered. The chain crosses the membrane as a helical span at residues 276-296 (VAIIVGGAAGVGFLVICLLFA). Positions 276 to 296 (VAIIVGGAAGVGFLVICLLFA) are necessary and sufficient for plasmodesmal targeting. The Cytoplasmic segment spans residues 297 to 307 (KNLMRKKHDDY).

It belongs to the cysteine-rich repeat secretory protein family. Plasmodesmata-located proteins (PDLD) subfamily. (Microbial infection) Interacts with Grapevine fanleaf virus (GFLV) 2B-MP. As to expression, highly expressed in inflorescence shoot apex. Uniformly expressed within the inflorescence meristem with the exception of a boundary zone between floral primordia and the meristem where the expression is weaker (at protein level).

Its subcellular location is the cell membrane. The protein resides in the cell junction. It localises to the plasmodesma. Modulates cell-to-cell trafficking. This Arabidopsis thaliana (Mouse-ear cress) protein is Plasmodesmata-located protein 2.